We begin with the raw amino-acid sequence, 258 residues long: UPF0246 protein YE0603 (258 aa).

Belongs to the UPF0246 family.

This is UPF0246 protein YE0603 from Yersinia enterocolitica serotype O:8 / biotype 1B (strain NCTC 13174 / 8081).